Consider the following 194-residue polypeptide: Ribonuclease HII (194 aa).

The region spanning 3–193 (ILTAGVDEAG…VRNLLAQQAL (191 aa)) is the RNase H type-2 domain. A divalent metal cation-binding residues include aspartate 9, glutamate 10, and aspartate 101.

The protein belongs to the RNase HII family. Mn(2+) is required as a cofactor. The cofactor is Mg(2+).

It localises to the cytoplasm. It catalyses the reaction Endonucleolytic cleavage to 5'-phosphomonoester.. Functionally, endonuclease that specifically degrades the RNA of RNA-DNA hybrids. In Neisseria gonorrhoeae (strain ATCC 700825 / FA 1090), this protein is Ribonuclease HII.